The primary structure comprises 166 residues: NADH-ubiquinone oxidoreductase chain 6 (166 aa).

6 helical membrane-spanning segments follow: residues 4–24, 27–47, 50–70, 82–102, 109–129, and 135–155; these read FFSL…VVSA, QGVV…VFLG, FAAL…FGYC, VGGT…LLCL, LLVY…VGVF, and WGLI…LVIL.

The protein belongs to the complex I subunit 6 family.

The protein localises to the mitochondrion membrane. The enzyme catalyses a ubiquinone + NADH + 5 H(+)(in) = a ubiquinol + NAD(+) + 4 H(+)(out). Core subunit of the mitochondrial membrane respiratory chain NADH dehydrogenase (Complex I) that is believed to belong to the minimal assembly required for catalysis. Complex I functions in the transfer of electrons from NADH to the respiratory chain. The immediate electron acceptor for the enzyme is believed to be ubiquinone. This Lycodon semicarinatus (Ryukyu odd-tooth snake) protein is NADH-ubiquinone oxidoreductase chain 6 (MT-ND6).